Here is a 167-residue protein sequence, read N- to C-terminus: Endothelin-3 (167 aa).

The first 19 residues, 1–19 (MELGLWLLLGLTVTSAAAA), serve as a signal peptide directing secretion. Residues 20-50 (LPAQPGNAGQERGPGRSGDQEEKRVPAHHRP) constitute a propeptide that is removed on maturation. Residues 22 to 45 (AQPGNAGQERGPGRSGDQEEKRVP) are disordered. Intrachain disulfides connect C53–C67 and C55–C63. Positions 74–167 (INTPEQTVPY…KSRTDKVHQP (94 aa)) are excised as a propeptide. Residues 85–112 (LSNHRGSLRGKRSSGPVPESSQSSPQTR) form a disordered region. Over residues 97 to 109 (SSGPVPESSQSSP) the composition is skewed to low complexity. Residues 115-135 (CACSGVDDKACAYFCAHVTSY) form an endothelin-like region. The segment covering 140-149 (EKAAAEEKQE) has biased composition (basic and acidic residues). The segment at 140–167 (EKAAAEEKQETGGPRQRLKSRTDKVHQP) is disordered.

This sequence belongs to the endothelin/sarafotoxin family.

Its subcellular location is the secreted. In terms of biological role, endothelins are endothelium-derived vasoconstrictor peptides. The polypeptide is Endothelin-3 (Edn3) (Rattus norvegicus (Rat)).